Here is a 101-residue protein sequence, read N- to C-terminus: Putative pterin-4-alpha-carbinolamine dehydratase (101 aa).

The protein belongs to the pterin-4-alpha-carbinolamine dehydratase family.

The enzyme catalyses (4aS,6R)-4a-hydroxy-L-erythro-5,6,7,8-tetrahydrobiopterin = (6R)-L-erythro-6,7-dihydrobiopterin + H2O. In Rhizobium etli (strain ATCC 51251 / DSM 11541 / JCM 21823 / NBRC 15573 / CFN 42), this protein is Putative pterin-4-alpha-carbinolamine dehydratase.